The following is a 168-amino-acid chain: Crossover junction endodeoxyribonuclease RuvC (168 aa).

Residues D7, E66, and D138 contribute to the active site. Mg(2+) is bound by residues D7, E66, and D138.

Belongs to the RuvC family. As to quaternary structure, homodimer which binds Holliday junction (HJ) DNA. The HJ becomes 2-fold symmetrical on binding to RuvC with unstacked arms; it has a different conformation from HJ DNA in complex with RuvA. In the full resolvosome a probable DNA-RuvA(4)-RuvB(12)-RuvC(2) complex forms which resolves the HJ. Requires Mg(2+) as cofactor.

The protein resides in the cytoplasm. It carries out the reaction Endonucleolytic cleavage at a junction such as a reciprocal single-stranded crossover between two homologous DNA duplexes (Holliday junction).. In terms of biological role, the RuvA-RuvB-RuvC complex processes Holliday junction (HJ) DNA during genetic recombination and DNA repair. Endonuclease that resolves HJ intermediates. Cleaves cruciform DNA by making single-stranded nicks across the HJ at symmetrical positions within the homologous arms, yielding a 5'-phosphate and a 3'-hydroxyl group; requires a central core of homology in the junction. The consensus cleavage sequence is 5'-(A/T)TT(C/G)-3'. Cleavage occurs on the 3'-side of the TT dinucleotide at the point of strand exchange. HJ branch migration catalyzed by RuvA-RuvB allows RuvC to scan DNA until it finds its consensus sequence, where it cleaves and resolves the cruciform DNA. This chain is Crossover junction endodeoxyribonuclease RuvC, found in Cereibacter sphaeroides (strain ATCC 17029 / ATH 2.4.9) (Rhodobacter sphaeroides).